The following is an 88-amino-acid chain: Eclosion hormone (88 aa).

An N-terminal signal peptide occupies residues 1-26 (MANKLTAVIVVALAVAFMVNLDYANC). Cystine bridges form between Cys-40-Cys-64, Cys-44-Cys-60, and Cys-47-Cys-75.

Belongs to the insect eclosion hormone family.

It localises to the secreted. Its function is as follows. Neuropeptide that triggers the performance of ecdysis behaviors at the end of a molt. It triggers adult behavior patterns: larval, pupal and adult ecdysis, and plasticization during the molt. The polypeptide is Eclosion hormone (Bombyx mori (Silk moth)).